The chain runs to 525 residues: Probable lipid II flippase MurJ (525 aa).

Helical transmembrane passes span 10–30 (LLKSGIIVSAMTLISRVLGLV), 32–52 (DVVVANLMGAGASADVFFFAN), 100–120 (VLVTIVTLIGVLGSGAVTALF), 140–160 (LASLLLKITFPYLWFITFVAL), 171–191 (FAVSSFTPVFLNVMMILCAWY), 203–223 (LAIGVFLGGLVQFLFQLPFLI), 247–267 (MIPALFGVSVSQINLLFDSFV), 285–305 (LLEFPLGLFGIAIATVILPAL), 330–350 (FLGIPAMLGLMVLAKPMLMVL), 368–388 (LLAYSSGLLSFMLIKVLAPGY), 402–422 (IIAMVSNIVLNAIFAWFYGYV), 423–443 (GLAVATSMSAFLNMALLYRGL), 455–475 (TVWFVARLAMAGAVMTGALLW), and 495–515 (LTGLIGLGVASYLAILLLLGV).

The protein belongs to the MurJ/MviN family.

The protein resides in the cell inner membrane. The protein operates within cell wall biogenesis; peptidoglycan biosynthesis. Functionally, involved in peptidoglycan biosynthesis. Transports lipid-linked peptidoglycan precursors from the inner to the outer leaflet of the cytoplasmic membrane. In Vibrio cholerae serotype O1 (strain ATCC 39315 / El Tor Inaba N16961), this protein is Probable lipid II flippase MurJ.